The sequence spans 237 residues: 2,3,4,5-tetrahydropyridine-2,6-dicarboxylate N-acetyltransferase (237 aa).

Belongs to the transferase hexapeptide repeat family. DapH subfamily.

It carries out the reaction (S)-2,3,4,5-tetrahydrodipicolinate + acetyl-CoA + H2O = L-2-acetamido-6-oxoheptanedioate + CoA. The protein operates within amino-acid biosynthesis; L-lysine biosynthesis via DAP pathway; LL-2,6-diaminopimelate from (S)-tetrahydrodipicolinate (acetylase route): step 1/3. In terms of biological role, catalyzes the transfer of an acetyl group from acetyl-CoA to tetrahydrodipicolinate. In Alkaliphilus metalliredigens (strain QYMF), this protein is 2,3,4,5-tetrahydropyridine-2,6-dicarboxylate N-acetyltransferase.